The following is a 528-amino-acid chain: Chromosomal replication initiator protein DnaA (528 aa).

A domain I, interacts with DnaA modulators region spans residues 1-104 (MNDDPNALAR…PVDDEPESEA (104 aa)). The interval 93–159 (AAPVDDEPES…DFEEVDDDSE (67 aa)) is disordered. Residues 104–123 (APSRERRPDPEPVHTPRHLE) are compositionally biased toward basic and acidic residues. Positions 105–187 (PSRERRPDPE…GPAPAATGGN (83 aa)) are domain II. A compositionally biased stretch (acidic residues) spans 149–159 (TDFEEVDDDSE). The interval 188 to 404 (SLNAKYTFDT…GALIRVTAFA (217 aa)) is domain III, AAA+ region. ATP is bound by residues G232, G234, K235, and T236. The interval 405–528 (SLNRQPLDLT…TARIKQRSKR (124 aa)) is domain IV, binds dsDNA.

This sequence belongs to the DnaA family. Oligomerizes as a right-handed, spiral filament on DNA at oriC.

The protein resides in the cytoplasm. Functionally, plays an essential role in the initiation and regulation of chromosomal replication. ATP-DnaA binds to the origin of replication (oriC) to initiate formation of the DNA replication initiation complex once per cell cycle. Binds the DnaA box (a 9 base pair repeat at the origin) and separates the double-stranded (ds)DNA. Forms a right-handed helical filament on oriC DNA; dsDNA binds to the exterior of the filament while single-stranded (ss)DNA is stabiized in the filament's interior. The ATP-DnaA-oriC complex binds and stabilizes one strand of the AT-rich DNA unwinding element (DUE), permitting loading of DNA polymerase. After initiation quickly degrades to an ADP-DnaA complex that is not apt for DNA replication. Binds acidic phospholipids. The protein is Chromosomal replication initiator protein DnaA of Rhodococcus opacus (strain B4).